Reading from the N-terminus, the 289-residue chain is MSWLEKLLDKNNIINTRKTSIPEGVWTKCPSCEQVLYRIALKENLEVCPKCNHHMRMTARDRLDSFLDKEKQSEIACEYEPKDVLNFKDKKRYKERIALAQKSTGEKDALVAMKGELLGLPIVACAFEFSFMAGSMGSVVGAKFVEAVDIAIEENRGLVCFSACGGARMQESLMALMQMAKTSAALDHLSRVGLPYISVLTDQTFGGVSASIAMMGDINIGEPEARIGFAGRRVIEQTVREKLPDGFQQSEFLLEHGALDMIVERSDMRRKIGGLIAKLTNKSIQPEAE.

The CoA carboxyltransferase N-terminal domain occupies 25–289 (VWTKCPSCEQ…TNKSIQPEAE (265 aa)). The Zn(2+) site is built by Cys29, Cys32, Cys48, and Cys51. Residues 29 to 51 (CPSCEQVLYRIALKENLEVCPKC) form a C4-type zinc finger.

The protein belongs to the AccD/PCCB family. Acetyl-CoA carboxylase is a heterohexamer composed of biotin carboxyl carrier protein (AccB), biotin carboxylase (AccC) and two subunits each of ACCase subunit alpha (AccA) and ACCase subunit beta (AccD). The cofactor is Zn(2+).

The protein resides in the cytoplasm. It carries out the reaction N(6)-carboxybiotinyl-L-lysyl-[protein] + acetyl-CoA = N(6)-biotinyl-L-lysyl-[protein] + malonyl-CoA. It participates in lipid metabolism; malonyl-CoA biosynthesis; malonyl-CoA from acetyl-CoA: step 1/1. Its function is as follows. Component of the acetyl coenzyme A carboxylase (ACC) complex. Biotin carboxylase (BC) catalyzes the carboxylation of biotin on its carrier protein (BCCP) and then the CO(2) group is transferred by the transcarboxylase to acetyl-CoA to form malonyl-CoA. This is Acetyl-coenzyme A carboxylase carboxyl transferase subunit beta 2 from Vibrio campbellii (strain ATCC BAA-1116).